The chain runs to 663 residues: Methionine--tRNA ligase (663 aa).

The short motif at 10–20 is the 'HIGH' region element; the sequence is AYTNGPLHLGH. Zn(2+)-binding residues include cysteine 142, cysteine 145, cysteine 154, and cysteine 157. The 'KMSKS' region signature appears at 323–327; sequence KMSTS. Threonine 326 contacts ATP. Residues 563–663 form the tRNA-binding domain; sequence YFGNIDLRVG…RDLPVGSKIH (101 aa).

It belongs to the class-I aminoacyl-tRNA synthetase family. MetG type 1 subfamily. Homodimer. Requires Zn(2+) as cofactor.

Its subcellular location is the cytoplasm. The enzyme catalyses tRNA(Met) + L-methionine + ATP = L-methionyl-tRNA(Met) + AMP + diphosphate. Functionally, is required not only for elongation of protein synthesis but also for the initiation of all mRNA translation through initiator tRNA(fMet) aminoacylation. In Methanococcus maripaludis (strain C5 / ATCC BAA-1333), this protein is Methionine--tRNA ligase.